The primary structure comprises 385 residues: 28S rRNA (uridine-N(3))-methyltransferase (385 aa).

Disordered regions lie at residues 1–35 and 47–72; these read MAERPRKRPCGPGEHGQRVEWRKWKQQKKEEKKKW and QRAQEEEAKRQEEEEEAAAQRSNQGR. Composition is skewed to basic and acidic residues over residues 15 to 35 and 47 to 58; these read HGQRVEWRKWKQQKKEEKKKW and QRAQEEEAKRQE. S-adenosyl-L-methionine contacts are provided by Arg-293, Gly-313, Asn-342, and Thr-343.

It belongs to the class IV-like SAM-binding methyltransferase superfamily. In terms of assembly, interacts with INCA1.

It localises to the cytoplasm. The protein resides in the cytoskeleton. It is found in the spindle. The protein localises to the chromosome. Its subcellular location is the centromere. It localises to the kinetochore. The protein resides in the microtubule organizing center. It is found in the centrosome. It catalyses the reaction uridine in 28S rRNA + S-adenosyl-L-methionine = N(3)-methyluridine in 28S rRNA + S-adenosyl-L-homocysteine + H(+). Its function is as follows. S-adenosyl-L-methionine-dependent methyltransferase that specifically methylates the N3 position of a uridine in 28S rRNA. Required for association of the centrosomes with the poles of the bipolar mitotic spindle during metaphase. Also involved in chromosome alignment. May promote centrosome maturation probably by recruiting A-kinase anchor protein AKAP9 to centrosomes in early mitosis. Binds specifically to miRNA MIR145 hairpin, regulates MIR145 expression at a postranscriptional level. The chain is 28S rRNA (uridine-N(3))-methyltransferase from Mus musculus (Mouse).